The primary structure comprises 177 residues: MSRVGKSPITVPKGAEISINGANITVKGPLGTLTHNLHPSVGLKQEDGVLTVVLNNDSPEAGAQSGTARALVNNMVVGVTTGFERKLSLVGVGYRAAAQGETLKLQLGFSHDIIYNLPKGVKAETPSQTEIIIKGSNKQQVGQVAAEVRAYRSPEPYKGKGVRYVDEVVHLKETKKK.

Belongs to the universal ribosomal protein uL6 family. Part of the 50S ribosomal subunit.

In terms of biological role, this protein binds to the 23S rRNA, and is important in its secondary structure. It is located near the subunit interface in the base of the L7/L12 stalk, and near the tRNA binding site of the peptidyltransferase center. This Polynucleobacter necessarius subsp. necessarius (strain STIR1) protein is Large ribosomal subunit protein uL6.